A 1607-amino-acid polypeptide reads, in one-letter code: Phosphatidylinositol 3-kinase piki-1 (1607 aa).

In terms of domain architecture, UIM spans 2 to 21; sequence SDDEELQLAIEISKKTFKDE. 3 disordered regions span residues 54–91, 105–128, and 142–182; these read EANS…HSQS, STSQ…KFPP, and PPPP…SFAS. Polar residues predominate over residues 58 to 69; the sequence is PGPSSYSGSLAT. Residues 158–169 are compositionally biased toward pro residues; it reads PPVPIHPTPPVS. The PI3K-RBD domain maps to 362–453; sequence ASTVKVVVYK…GDDVKLDLGV (92 aa). Residues 598–766 enclose the C2 PI3K-type domain; it reads KMDFLQIMLN…KIWDTEIYFP (169 aa). The PIK helical domain maps to 776 to 953; that stretch reads PQDFATLDIE…AIRCQNLQQK (178 aa). The PI3K/PI4K catalytic domain maps to 1029 to 1303; that stretch reads RIEECSVFNS…MIQNSLGSAF (275 aa). The segment at 1035–1041 is G-loop; it reads VFNSNAK. The tract at residues 1168–1176 is catalytic loop; it reads GIGDRHNDN. The activation loop stretch occupies residues 1187 to 1213; sequence HIDFGKYMGDWQMAAGFRRDRVPFVFT. The region spanning 1344-1458 is the PX domain; sequence GRISRVTVLK…TFFHSILRDN (115 aa). The 130-residue stretch at 1472 to 1601 folds into the C2 domain; the sequence is SQCQIYLKIE…KNCRTLEGWF (130 aa).

It belongs to the PI3/PI4-kinase family.

Its subcellular location is the cell projection. The protein localises to the phagocytic cup. It is found in the cytoplasmic vesicle. It localises to the phagosome membrane. The protein resides in the cytoplasm. It catalyses the reaction a 1,2-diacyl-sn-glycero-3-phospho-(1D-myo-inositol) + ATP = a 1,2-diacyl-sn-glycero-3-phospho-(1D-myo-inositol-3-phosphate) + ADP + H(+). In terms of biological role, phosphatidylinositol 3-kinase involved in clearance of apoptotic cell corpses by phagosomes. Phagosome maturation requires two sequential and non-overlapping pulses of phosphatidylinositol-3-phosphate (PI3P) on the vesicle surface which mediates recruitment of sortins snx-1 and lst-4 and small GTPases rab-5, rab-2 and rab-7. The first pulse is initiated by piki-1, then maintained by vps-34 which also produces the second pulse. Unlike vps-34, not involved in the formation of PI3P in early endosomes. This is Phosphatidylinositol 3-kinase piki-1 from Caenorhabditis elegans.